We begin with the raw amino-acid sequence, 6995 residues long: Fibrous sheath-interacting protein 2 (6995 aa).

Disordered regions lie at residues glutamate 273–glutamine 292, aspartate 308–lysine 336, and glycine 351–proline 476. The span at threonine 359–serine 396 shows a compositional bias: polar residues. Residues glutamate 397–arginine 421 show a composition bias toward basic and acidic residues. Positions isoleucine 424 to leucine 442 are enriched in polar residues. At serine 430 the chain carries Phosphoserine. Residues aspartate 443–lysine 452 are compositionally biased toward basic and acidic residues. A compositionally biased stretch (polar residues) spans serine 453 to serine 463. A coiled-coil region spans residues leucine 665 to lysine 692. 9 disordered regions span residues proline 1452–threonine 1472, lysine 2554–methionine 2595, threonine 2699–valine 2731, proline 3182–threonine 3270, glycine 5489–glycine 5665, serine 5719–lysine 5740, lysine 5823–lysine 5878, lysine 5943–leucine 5996, and serine 6973–arginine 6995. The segment covering serine 2555 to serine 2565 has biased composition (basic and acidic residues). Over residues proline 3187 to valine 3204 the composition is skewed to polar residues. Over residues serine 3220–serine 3231 the composition is skewed to low complexity. The span at cysteine 3232–alanine 3250 shows a compositional bias: polar residues. Over residues serine 3255 to arginine 3265 the composition is skewed to basic residues. Over residues aspartate 5496 to threonine 5509 the composition is skewed to basic and acidic residues. Polar residues-rich tracts occupy residues methionine 5523–threonine 5557, glutamine 5565–methionine 5625, and valine 5638–lysine 5650. Composition is skewed to basic and acidic residues over residues serine 5719 to threonine 5738 and glycine 5829 to serine 5877. The span at serine 5982–proline 5993 shows a compositional bias: polar residues. Positions serine 6977–arginine 6995 are enriched in low complexity.

In terms of assembly, may interact with AKAP4. Predominantly expressed in testis.

Plays a role in spermatogenesis. In Mus musculus (Mouse), this protein is Fibrous sheath-interacting protein 2 (Fsip2).